The sequence spans 1226 residues: E3 ubiquitin-protein ligase mind-bomb (1226 aa).

Over residues 1-12 the composition is skewed to polar residues; the sequence is MSCAATLSSAKD. Disordered stretches follow at residues 1-42 and 66-87; these read MSCA…NTNT and GGGGSLPGGTTSSSSASAAGGV. Over residues 19-30 the composition is skewed to gly residues; sequence SGGGGGGGGGGA. Composition is skewed to low complexity over residues 31 to 42 and 73 to 86; these read PTNSNTNTNTNT and GGTTSSSSASAAGG. Residues 100 to 168 enclose the MIB/HERC2 1 domain; that stretch reads VRRFSMEGVG…AYDLRILDSA (69 aa). The ZZ-type zinc-finger motif lies at 174–226; it reads HEGTMCDTCRQQPIFGIRWKCAECINYDLCSICYHGDKHHLRHRFYRITTPGG. Residues C179, C182, C194, C197, C203, C206, H212, and H216 each contribute to the Zn(2+) site. In terms of domain architecture, MIB/HERC2 2 spans 237 to 315; sequence SKKVLARGIF…MADLKVVNDA (79 aa). ANK repeat units lie at residues 567–596, 600–629, 633–662, 666–695, 699–731, 735–765, 769–798, and 802–833; these read AGHTALQAASQNGHIEVIQVLLRHAVDVEI, DGDRAVHHAAFGDEAAVIEILAKAGADLNA, RRQTSLHIAVNKGHLNVVKTLLTLGCHPSL, EGDTPLHDAISKEHDEMLSLLLDFGADITL, NGFNALHHAALKGNPSAMKILLTKTNRPWIVEE, DGYTALHLAALNNHVEIAELLVHMGKANMDR, NLQTALHLAVERQHVQIVKLLVQDGADLNI, and DGDTPLHEALRHHTLSQLKQLQDVEGFGKLLM. Residues 890-919 are disordered; the sequence is TDDSELPGNVAGTSSSARARAASGSLNQSS. Residues 900–914 are compositionally biased toward low complexity; the sequence is AGTSSSARARAASGS. RING-type zinc fingers lie at residues 970–1005 and 1017–1052; these read CLVCSDAKRDTVFKPCGHVSCCETCAPRVKKCLICR and CLVCSDRRAAVFFRPCGHMVACEHCSALMKKCVLCR. The stretch at 1159-1181 forms a coiled coil; that stretch reads VNNFQMDDVQKLKQQLQDIKEQT. The RING-type 3 zinc finger occupies 1183-1216; that stretch reads CPVCFDRIKNMVFLCGHGTCQMCGDQIEGCPICR.

Interacts with intracellular domain of Dl and Ser. Ubiquitous in the wing imaginal disk (at protein level).

It localises to the cytoplasm. The protein resides in the cell cortex. It catalyses the reaction S-ubiquitinyl-[E2 ubiquitin-conjugating enzyme]-L-cysteine + [acceptor protein]-L-lysine = [E2 ubiquitin-conjugating enzyme]-L-cysteine + N(6)-ubiquitinyl-[acceptor protein]-L-lysine.. It participates in protein modification; protein ubiquitination. E3 ubiquitin-protein ligase that mediates ubiquitination of Delta (Dl) and Serrate (Ser) receptors, which act as ligands of Notch proteins. Positively regulates the Notch signaling by ubiquitinating the intracellular domain of Dl and Ser, leading to endocytosis of Dl and Ser receptors. Regulates a subset of Notch signaling events, including wing margin specification, leg segmentation and vein determination, that are distinct from those events requiring neuralize (neur) activity. Also modulates lateral inhibition, a neur- and Dl-dependent signaling event, suggesting a distinct but partially complementary function with neur. The polypeptide is E3 ubiquitin-protein ligase mind-bomb (mib1) (Drosophila melanogaster (Fruit fly)).